A 465-amino-acid polypeptide reads, in one-letter code: Poly(A) polymerase I (465 aa).

Residues D80, D82, and D162 contribute to the active site. The interval 430–465 (APPEQKGMLNELDDDPAPRRRRSRPRKRAPRREGTV) is disordered. Residues 448–459 (RRRRSRPRKRAP) are compositionally biased toward basic residues.

The protein belongs to the tRNA nucleotidyltransferase/poly(A) polymerase family.

It catalyses the reaction RNA(n) + ATP = RNA(n)-3'-adenine ribonucleotide + diphosphate. Adds poly(A) tail to the 3' end of many RNAs, which usually targets these RNAs for decay. Plays a significant role in the global control of gene expression, through influencing the rate of transcript degradation, and in the general RNA quality control. The protein is Poly(A) polymerase I of Salmonella typhimurium (strain LT2 / SGSC1412 / ATCC 700720).